A 1052-amino-acid polypeptide reads, in one-letter code: Suppressor of RPS4-RLD 1 (1052 aa).

Ala-2 carries the post-translational modification N-acetylalanine. 2 TPR repeats span residues 39-72 (ILDI…EPFA) and 74-106 (QAFI…ALQQ). Residues 107 to 136 (TADVKQLLELEELLKDARREIDGILKSHAT) adopt a coiled-coil conformation. The disordered stretch occupies residues 131–181 (LKSHATESPQETPAYHSEKSDEKSDKLDNHESGASSNGNSHESSSELGEQS). Basic and acidic residues predominate over residues 146–161 (HSEKSDEKSDKLDNHE). A compositionally biased stretch (low complexity) spans 162-181 (SGASSNGNSHESSSELGEQS). 9 TPR repeats span residues 297-330 (VDFR…EPTY), 331-364 (PEAL…NPAA), 365-398 (SEAW…EPNS), 400-432 (DVLH…EKDN), 433-466 (KSAY…DSNY), 468-500 (EAWL…DNRV), 502-534 (KAYH…ENTI), 535-567 (ECLY…ELDA), and 569-591 (EKFV…ASKV). The interval 704–739 (STKGTTKNGKKNRRRERTNILSQNRGGAGCSSSSFS) is disordered. The helical transmembrane segment at 966–986 (GTAVTGFVVLLGLLLAANMEF) threads the bilayer.

As to quaternary structure, multimer. Interacts with EDS1. Interacts with SNC1 and RPS4. Interacts (via TPR domain) with SGT1 (via TPR domain). Interacts with the TCP transcription factors TCP8, TCP14, TCP15, TCP20, TCP22 and TCP23. Ubiquitous. Not detected in very young flowers and older siliques.

The protein localises to the nucleus. The protein resides in the cytoplasm. It is found in the perinuclear region. It localises to the membrane. Its subcellular location is the microsome. Its function is as follows. Negative regulator of effector-triggered immunity associated with the EDS1 resistance pathway. May localize its interactors to a microsomal membrane. May therefore negatively regulate RPS4 and SNC1 translocation to the nucleus. Contributes to the regulation of RPS2 and RPS4 protein levels and negatively regulates SNC1 stability. This Arabidopsis thaliana (Mouse-ear cress) protein is Suppressor of RPS4-RLD 1.